The following is a 445-amino-acid chain: FAS-associated factor 2 (445 aa).

In terms of domain architecture, UBA spans 12–53; that stretch reads EQTEKLLQFQDLTGIESMDQCRQTLQQHNWNIEAAVQDRLNE. The stretch at 275–353 forms a coiled coil; that stretch reads SERLEREERN…ERKSECLPAE (79 aa). Over residues 303–348 the composition is skewed to basic and acidic residues; sequence ADQEKERKKKEKQEQKRREEEEAQLKQMLEERKKRNLEEEKERKSE. Positions 303–354 are disordered; sequence ADQEKERKKKEKQEQKRREEEEAQLKQMLEERKKRNLEEEKERKSECLPAEP. In terms of domain architecture, UBX spans 357 to 439; it reads DHPDNVKIIF…GLSQSQLLFV (83 aa).

It is found in the cytoplasm. Its subcellular location is the lipid droplet. The protein resides in the endoplasmic reticulum. Its function is as follows. Plays an important role in endoplasmic reticulum-associated degradation (ERAD) that mediates ubiquitin-dependent degradation of misfolded endoplasmic reticulum proteins. Involved in inhibition of lipid droplet degradation. Involved in stress granule disassembly. The protein is FAS-associated factor 2 (faf2) of Xenopus tropicalis (Western clawed frog).